Reading from the N-terminus, the 3102-residue chain is Laminin subunit alpha lam-3 (3102 aa).

Positions 1 to 16 are cleaved as a signal peptide; that stretch reads MRLWLGLLAVSNIALG. 3 N-linked (GlcNAc...) asparagine glycosylation sites follow: Asn19, Asn135, and Asn237. One can recognise a Laminin N-terminal domain in the interval 44-295; that stretch reads SERGLFPNIF…SISDISIGGQ (252 aa). 16 cysteine pairs are disulfide-bonded: Cys296–Cys305, Cys298–Cys316, Cys318–Cys327, Cys330–Cys350, Cys353–Cys362, Cys355–Cys387, Cys390–Cys399, Cys402–Cys420, Cys423–Cys435, Cys425–Cys451, Cys453–Cys462, Cys465–Cys475, Cys478–Cys491, Cys480–Cys496, Cys498–Cys507, and Cys510–Cys525. 4 Laminin EGF-like domains span residues 296–352, 353–422, 423–477, and 478–527; these read CICY…VCQQ, CQCF…ACRT, CECD…TCEP, and CPCN…GCQP. The region spanning 548–740 is the Laminin IV type A 1 domain; sequence INNIGWHLTD…QDTLMGGVEV (193 aa). Intrachain disulfides connect Cys774-Cys783, Cys776-Cys790, Cys793-Cys802, Cys805-Cys822, Cys825-Cys838, Cys827-Cys858, Cys861-Cys870, Cys873-Cys886, Cys889-Cys903, Cys891-Cys910, Cys913-Cys922, Cys925-Cys938, Cys941-Cys953, Cys943-Cys960, Cys962-Cys971, Cys974-Cys985, Cys988-Cys1000, Cys990-Cys1007, Cys1009-Cys1018, Cys1021-Cys1033, Cys1036-Cys1049, Cys1038-Cys1056, Cys1058-Cys1067, Cys1070-Cys1083, Cys1086-Cys1098, Cys1088-Cys1105, Cys1107-Cys1116, Cys1119-Cys1131, Cys1134-Cys1144, Cys1137-Cys1151, and Cys1153-Cys1162. Laminin EGF-like domains follow at residues 774–824, 825–888, 889–940, 941–987, 988–1035, 1036–1085, 1086–1133, 1134–1180, 1181–1226, and 1227–1283; these read CDCH…ACEQ, CECP…KCIE, CTCN…TCKP, CGCH…GCPA, CDCN…GCQF, CHCN…GCED, CGCD…GCTE, CEPC…GCKL, CDCS…TCEP, and CGCN…GCTE. Asn796 is a glycosylation site (N-linked (GlcNAc...) asparagine). The N-linked (GlcNAc...) asparagine glycan is linked to Asn991. An N-linked (GlcNAc...) asparagine glycan is attached at Asn1027. N-linked (GlcNAc...) asparagine glycosylation occurs at Asn1076. Residue Asn1164 is glycosylated (N-linked (GlcNAc...) asparagine). 9 cysteine pairs are disulfide-bonded: Cys1165/Cys1178, Cys1181/Cys1193, Cys1183/Cys1200, Cys1202/Cys1211, Cys1214/Cys1224, Cys1227/Cys1246, Cys1229/Cys1252, Cys1254/Cys1263, and Cys1266/Cys1281. An N-linked (GlcNAc...) asparagine glycan is attached at Asn1288. The Laminin IV type A 2 domain maps to 1295–1496; sequence QSDLVWQQMY…STTKAIGVEK (202 aa). 12 disulfide bridges follow: Cys1540/Cys1549, Cys1542/Cys1556, Cys1559/Cys1568, Cys1571/Cys1587, Cys1590/Cys1603, Cys1592/Cys1614, Cys1617/Cys1626, Cys1629/Cys1644, Cys1647/Cys1659, Cys1649/Cys1666, Cys1668/Cys1677, and Cys1680/Cys1691. Laminin EGF-like domains lie at 1540-1589, 1590-1646, and 1647-1693; these read CSCH…ACTK, CACP…TCSP, and CDCH…VCTS. N-linked (GlcNAc...) asparagine glycosylation is found at Asn1717, Asn1734, Asn1777, Asn1806, Asn1839, Asn1875, Asn1969, Asn1984, and Asn2048. Residues 2061 to 2084 are disordered; that stretch reads EAVSKMLGSEGSESGDANEESLRS. N-linked (GlcNAc...) asparagine glycosylation is found at Asn2091, Asn2193, Asn2369, and Asn2479. Laminin G-like domains lie at 2467-2644, 2652-2839, and 2913-3088; these read SQRG…TDGC, DKII…IGMC, and RYGL…AKAC. A disulfide bridge links Cys2617 with Cys2644. N-linked (GlcNAc...) asparagine glycans are attached at residues Asn2672 and Asn2686. A disulfide bridge links Cys2814 with Cys2839. Asn2932, Asn2959, and Asn3007 each carry an N-linked (GlcNAc...) asparagine glycan. Residues Cys3058 and Cys3088 are joined by a disulfide bond.

In terms of assembly, laminin is a complex glycoprotein, consisting of three different polypeptide chains (alpha, beta, gamma), which are bound to each other by disulfide bonds into a cross-shaped molecule comprising one long and three short arms with globules at each end.

The protein localises to the secreted. The protein resides in the extracellular space. It localises to the extracellular matrix. It is found in the basement membrane. Binding to cells via a high affinity receptor, laminin is thought to mediate the attachment, migration and organization of cells into tissues during embryonic development by interacting with other extracellular matrix components. Required to assemble a stable basement membrane and for organizing receptor complexes and cytoskeletal components to the proper cell surfaces. During embryogenesis, does not require the presence of collagen type IV in order to associate with cell surfaces, prior to assembly of the prototypical basement membrane. Plays an important role in muscle contraction of the body. Probably plays a distinct role from the related laminin subunit alpha epi-1. This is Laminin subunit alpha lam-3 from Caenorhabditis elegans.